The chain runs to 225 residues: Orotidine 5'-phosphate decarboxylase (225 aa).

Residues D9, K31, 58 to 67, T115, R176, Q184, G204, and R205 each bind substrate; that span reads DLKLHDIPNT. K60 (proton donor) is an active-site residue.

This sequence belongs to the OMP decarboxylase family. Type 1 subfamily. In terms of assembly, homodimer.

The catalysed reaction is orotidine 5'-phosphate + H(+) = UMP + CO2. It functions in the pathway pyrimidine metabolism; UMP biosynthesis via de novo pathway; UMP from orotate: step 2/2. Its function is as follows. Catalyzes the decarboxylation of orotidine 5'-monophosphate (OMP) to uridine 5'-monophosphate (UMP). The chain is Orotidine 5'-phosphate decarboxylase from Wolbachia sp. subsp. Brugia malayi (strain TRS).